Consider the following 210-residue polypeptide: NDR1/HIN1-like protein 12 (210 aa).

The helical transmembrane segment at 23–43 (GVIIGFIIIVLITIFLVWIIL) threads the bilayer. Residue Asn61 is glycosylated (N-linked (GlcNAc...) asparagine).

In terms of assembly, may form oligomers or be a component of larger protein complex in plasma membranes. As to expression, expressed in leaves, stems and flowers, and, to a lower extent, in siliques and roots.

The protein localises to the cell membrane. May play a role in plant immunity. The chain is NDR1/HIN1-like protein 12 from Arabidopsis thaliana (Mouse-ear cress).